Reading from the N-terminus, the 259-residue chain is Apolipoprotein A-I (259 aa).

The N-terminal stretch at Met-1–Ala-18 is a signal peptide. 2 consecutive repeat copies span residues Leu-67–Gly-88 and Pro-89–Asn-110. Residues Leu-67–Ala-259 form a 10 X approximate tandem repeats region. Met-109 is modified (methionine sulfoxide). The stretch at Lys-111 to Gln-121 is one 3; half-length repeat. The stretch at Pro-122 to Glu-143 is repeat 4. The 5; truncated repeat unit spans residues Pro-144 to Lys-161. Repeat 6 spans residues Val-162–Gly-183. The stretch at Leu-184–His-203 is one 7; truncated repeat. Methionine sulfoxide is present on Met-189. Repeat 8 spans residues Pro-204–Lys-225. A 9; half-length repeat occupies Pro-226 to Met-236. A Methionine sulfoxide modification is found at Met-236. Copy 10 of the repeat occupies Pro-237–Ala-259.

It belongs to the apolipoprotein A1/A4/E family. Homodimer. Interacts with APOA1BP and CLU. Component of a sperm activating protein complex (SPAP), consisting of APOA1, an immunoglobulin heavy chain, an immunoglobulin light chain and albumin. Interacts with NDRG1. Interacts with SCGB3A2. Interacts with NAXE and YJEFN3. Glycosylated. Post-translationally, palmitoylated. In terms of processing, phosphorylation sites are present in the extracellular medium. In terms of tissue distribution, major protein of plasma HDL, also found in chylomicrons.

It is found in the secreted. Functionally, participates in the reverse transport of cholesterol from tissues to the liver for excretion by promoting cholesterol efflux from tissues and by acting as a cofactor for the lecithin cholesterol acyltransferase (LCAT). As part of the SPAP complex, activates spermatozoa motility. The protein is Apolipoprotein A-I (Apoa1) of Rattus norvegicus (Rat).